The following is a 1070-amino-acid chain: DNA-directed RNA polymerase subunit beta (1070 aa).

The protein belongs to the RNA polymerase beta chain family. In terms of assembly, in plastids the minimal PEP RNA polymerase catalytic core is composed of four subunits: alpha, beta, beta', and beta''. When a (nuclear-encoded) sigma factor is associated with the core the holoenzyme is formed, which can initiate transcription.

The protein localises to the plastid. Its subcellular location is the chloroplast. The enzyme catalyses RNA(n) + a ribonucleoside 5'-triphosphate = RNA(n+1) + diphosphate. Its function is as follows. DNA-dependent RNA polymerase catalyzes the transcription of DNA into RNA using the four ribonucleoside triphosphates as substrates. The polypeptide is DNA-directed RNA polymerase subunit beta (Silene latifolia (White campion)).